The sequence spans 393 residues: MAKESYKRDKPHVNIGTIGHVDHGKTTLTAAITSVLAKSGMADAREFGDIDKAPEERERGITISTAHVEYQTVKRHYAHIDCPGHADYIKNMITGAAQMDGAILVVAGTDGPMPQTREHILLARQVNVPALVVFLNKVDIADPELLELVEMELRELLTEYGFPGDDIPIIKGSALKALDGDAEGEKAIMELMDAVDNYIPEPVRDVDKPFLMPVEDVFSISGRGTVGTGRIERGRIKINEEVEIVGIRDTRKSVVTGIEMFQKLLDEGQAGDNAGLLLRGVDKNDLERGMVIAKPGTIKPHTKFKAEVYILKKEEGGRHTPFFTNYRPQFYFRTTDVTGAVSLPEGVEMVMPGDNLSVEVELIAPIAMDEGLRFAIREGGRTVGAGSVTKIND.

In terms of domain architecture, tr-type G spans 10–203 (KPHVNIGTIG…AVDNYIPEPV (194 aa)). The interval 19-26 (GHVDHGKT) is G1. 19 to 26 (GHVDHGKT) provides a ligand contact to GTP. Thr26 provides a ligand contact to Mg(2+). The interval 60-64 (GITIS) is G2. Residues 81–84 (DCPG) form a G3 region. Residues 81–85 (DCPGH) and 136–139 (NKVD) contribute to the GTP site. The tract at residues 136 to 139 (NKVD) is G4. Residues 173–175 (SAL) are G5.

It belongs to the TRAFAC class translation factor GTPase superfamily. Classic translation factor GTPase family. EF-Tu/EF-1A subfamily. In terms of assembly, monomer.

It is found in the cytoplasm. The catalysed reaction is GTP + H2O = GDP + phosphate + H(+). In terms of biological role, GTP hydrolase that promotes the GTP-dependent binding of aminoacyl-tRNA to the A-site of ribosomes during protein biosynthesis. The protein is Elongation factor Tu of Chlorobium phaeovibrioides (strain DSM 265 / 1930) (Prosthecochloris vibrioformis (strain DSM 265)).